Reading from the N-terminus, the 1441-residue chain is Protein clueless (1441 aa).

Disordered regions lie at residues 1–79 and 106–131; these read MALD…EAAT and VAAN…ELES. The segment covering 8-22 has biased composition (polar residues); it reads KNSSSAATGDANTVK. The span at 54–63 shows a compositional bias: basic residues; it reads AKKKGKKNRN. Low complexity-rich tracts occupy residues 64 to 79 and 106 to 126; these read KSPP…EAAT and VAAN…AASS. S273 bears the Phosphoserine mark. In terms of domain architecture, Clu spans 427–669; that stretch reads RAEDAFSSKL…RTFPPDVNFL (243 aa). Basic and acidic residues predominate over residues 726–753; the sequence is KKQDEAKEGTKEPASETEKESPPKAITE. Disordered regions lie at residues 726–769 and 961–1009; these read KKQD…GETK and EIHK…SGGT. A compositionally biased stretch (basic residues) spans 964–977; the sequence is KKRTNTKYNKHKSS. The span at 978–1009 shows a compositional bias: low complexity; that stretch reads KSSGSGSKQSGQTSNQNGTSTSPSSSTASGGT. 3 TPR repeats span residues 1109–1142, 1235–1268, and 1270–1303; these read AYNF…LNNV, ALID…NLKY, and GAKA…EKET.

This sequence belongs to the CLU family.

It localises to the cytoplasm. In terms of biological role, mRNA-binding protein involved in proper cytoplasmic distribution of mitochondria. This is Protein clueless from Drosophila willistoni (Fruit fly).